The chain runs to 153 residues: Transcriptional repressor NrdR (153 aa).

Residues 3 to 34 fold into a zinc finger; it reads CPFCNSTDTQVKDSRSIENDMLIRRRRVCLVC. An ATP-cone domain is found at 49–139; the sequence is FMVVKKNGET…VYMNFRNIND (91 aa).

Belongs to the NrdR family. Zn(2+) serves as cofactor.

Functionally, negatively regulates transcription of bacterial ribonucleotide reductase nrd genes and operons by binding to NrdR-boxes. The sequence is that of Transcriptional repressor NrdR from Ehrlichia chaffeensis (strain ATCC CRL-10679 / Arkansas).